The sequence spans 451 residues: Exodeoxyribonuclease 7 large subunit (451 aa).

The protein belongs to the XseA family. Heterooligomer composed of large and small subunits.

It is found in the cytoplasm. The catalysed reaction is Exonucleolytic cleavage in either 5'- to 3'- or 3'- to 5'-direction to yield nucleoside 5'-phosphates.. Its function is as follows. Bidirectionally degrades single-stranded DNA into large acid-insoluble oligonucleotides, which are then degraded further into small acid-soluble oligonucleotides. In Neisseria gonorrhoeae (strain ATCC 700825 / FA 1090), this protein is Exodeoxyribonuclease 7 large subunit.